Here is a 573-residue protein sequence, read N- to C-terminus: 2-succinyl-5-enolpyruvyl-6-hydroxy-3-cyclohexene-1-carboxylate synthase (573 aa).

This sequence belongs to the TPP enzyme family. MenD subfamily. As to quaternary structure, homodimer. The cofactor is Mg(2+). It depends on Mn(2+) as a cofactor. Requires thiamine diphosphate as cofactor.

It carries out the reaction isochorismate + 2-oxoglutarate + H(+) = 5-enolpyruvoyl-6-hydroxy-2-succinyl-cyclohex-3-ene-1-carboxylate + CO2. Its pathway is quinol/quinone metabolism; 1,4-dihydroxy-2-naphthoate biosynthesis; 1,4-dihydroxy-2-naphthoate from chorismate: step 2/7. It functions in the pathway quinol/quinone metabolism; menaquinone biosynthesis. Catalyzes the thiamine diphosphate-dependent decarboxylation of 2-oxoglutarate and the subsequent addition of the resulting succinic semialdehyde-thiamine pyrophosphate anion to isochorismate to yield 2-succinyl-5-enolpyruvyl-6-hydroxy-3-cyclohexene-1-carboxylate (SEPHCHC). The chain is 2-succinyl-5-enolpyruvyl-6-hydroxy-3-cyclohexene-1-carboxylate synthase from Shewanella sp. (strain W3-18-1).